We begin with the raw amino-acid sequence, 370 residues long: NSFL1 cofactor p47 (370 aa).

The segment at 54–73 is disordered; sequence SQATPSSVSRGTAPSDNRVT. 3 positions are modified to phosphoserine: S74, S102, and S114. Disordered stretches follow at residues 80 to 116 and 138 to 157; these read HDQD…KSPN and TKSP…GYRL. The short motif at 109–115 is the Nuclear localization signal element; the sequence is PPRKKSP. S140 is modified (phosphoserine; by CDK1). Residue Y167 is modified to Phosphotyrosine. The Nuclear localization signal motif lies at 172–175; sequence RRRH. A phosphoserine mark is found at S176, S192, and S272. One can recognise an SEP domain in the interval 179 to 244; that stretch reads DVHVVLKLWK…MEDHRDEDFV (66 aa). The UBX domain maps to 291–368; sequence EAEPTTNIQI…NLLNAVIVQR (78 aa).

It belongs to the NSFL1C family. As to quaternary structure, part of a ternary complex containing STX5A, NSFL1C and VCP. NSFL1C forms a homotrimer that binds to one end of a VCP homohexamer. The complex binds to membranes enriched in phosphatidylethanolamine-containing lipids and promotes Golgi membrane fusion. Interaction with VCIP135 leads to dissociation of the complex via ATP hydrolysis by VCP. Binds ubiquitin and mono-ubiquitinated proteins via its N-terminal UBA-like domain when bound to VCP. Phosphorylated during mitosis. Phosphorylation inhibits interaction with Golgi membranes and is required for the fragmentation of the Golgi stacks during mitosis. As to expression, highly expressed in heart, brain, spleen, lung, liver, muscle, kidney and testis.

The protein localises to the nucleus. The protein resides in the golgi apparatus. Its subcellular location is the golgi stack. It localises to the chromosome. It is found in the cytoplasm. The protein localises to the cytoskeleton. The protein resides in the microtubule organizing center. Its subcellular location is the centrosome. In terms of biological role, reduces the ATPase activity of VCP. Necessary for the fragmentation of Golgi stacks during mitosis and for VCP-mediated reassembly of Golgi stacks after mitosis. May play a role in VCP-mediated formation of transitional endoplasmic reticulum (tER). Inhibits the activity of CTSL (in vitro). Together with UBXN2B/p37, regulates the centrosomal levels of kinase AURKA/Aurora A during mitotic progression by promoting AURKA removal from centrosomes in prophase. Also, regulates spindle orientation during mitosis. The polypeptide is NSFL1 cofactor p47 (Nsfl1c) (Rattus norvegicus (Rat)).